Reading from the N-terminus, the 381-residue chain is tRNA pseudouridine synthase Pus10 (381 aa).

The active-site Nucleophile is D226.

Belongs to the pseudouridine synthase Pus10 family.

The enzyme catalyses uridine(54) in tRNA = pseudouridine(54) in tRNA. The catalysed reaction is uridine(55) in tRNA = pseudouridine(55) in tRNA. Its function is as follows. Responsible for synthesis of pseudouridine from uracil-54 and uracil-55 in the psi GC loop of transfer RNAs. The protein is tRNA pseudouridine synthase Pus10 of Nitrosopumilus maritimus (strain SCM1).